A 156-amino-acid chain; its full sequence is Envelope glycoprotein L (156 aa).

Residues 1–16 form the signal peptide; sequence MSPLVAVLVFFSAALG. Positions 21-141 are interaction with gH; it reads GVAGNPHGLD…KELGEVAVHK (121 aa). In terms of domain architecture, gL alphaherpesvirus-type spans 50 to 156; the sequence is ELEWDDEDHP…LRYNGGPPAE (107 aa). The cysteines at positions 71 and 95 are disulfide-linked.

It belongs to the herpesviridae glycoprotein L (gL) family. Alphaherpesvirinae gL subfamily. As to quaternary structure, interacts with glycoprotein H (gH); this interaction is necessary for the correct processing and cell surface expression of gH. The heterodimer gH/gL seems to interact with gB trimers during fusion. In terms of processing, O-glycosylated, and sialylated.

It localises to the virion membrane. Its subcellular location is the host cell membrane. It is found in the host Golgi apparatus. The protein resides in the host trans-Golgi network. Functionally, the heterodimer glycoprotein H-glycoprotein L is required for the fusion of viral and plasma membranes leading to virus entry into the host cell. Acts as a functional inhibitor of gH and maintains gH in an inhibited form. Upon binding to host integrins, gL dissociates from gH leading to activation of the viral fusion glycoproteins gB and gH. The protein is Envelope glycoprotein L of Sus scrofa (Pig).